We begin with the raw amino-acid sequence, 552 residues long: Leiomodin-2 (552 aa).

The segment at 1–47 (MSTFGYRRELSKYEDIDEDELLASLTEEELKELERELEDIEPDRNLP) is interaction with tropomyosin alpha. Interaction with actin regions lie at residues 1–169 (MSTF…SSHV) and 170–498 (RHKK…KEIK). Positions 13-46 (YEDIDEDELLASLTEEELKELERELEDIEPDRNL) form a coiled coil. 3 disordered regions span residues 33–67 (LERE…FSRE), 87–191 (GACE…DGKD), and 364–531 (MDKQ…DNLM). Polar residues predominate over residues 51–64 (RQKSLTEKTPTGTF). Residues 86–151 (LGACEKDSEQ…DDEDEEKQNS (66 aa)) are a coiled coil. 2 stretches are compositionally biased toward acidic residues: residues 93 to 108 (SEQE…EECF) and 115 to 147 (VSEE…EDEE). A compositionally biased stretch (basic and acidic residues) spans 364 to 377 (MDKQRQKRMQEQRQ). A compositionally biased stretch (low complexity) spans 398 to 415 (PRSSPYTSPKSSPWSSPK). Residues 425–450 (SQPPAPAPPPPPPPPPPPPPPPPPVI) show a composition bias toward pro residues. A compositionally biased stretch (basic residues) spans 478 to 488 (QKKKKGKKGKK). A compositionally biased stretch (basic and acidic residues) spans 489-513 (HENSILKEIKDSLKSVSDRKSEEGS). The span at 514 to 524 (RPSTRPSTPQR) shows a compositional bias: polar residues. The interaction with actin 3 stretch occupies residues 526–545 (LHDNLMEAIRASSIKQLRRV). Residues 526–545 (LHDNLMEAIRASSIKQLRRV) form the WH2 domain.

Belongs to the tropomodulin family. As to quaternary structure, can bind at least three actin monomers and thereby provides a nucleus for actin filament formation. Interacts (via N-terminus) with tropomyosin alpha (TPM1) (via N-terminus). May also interact with TPM2 (via N-terminus).

It localises to the cytoplasm. It is found in the myofibril. The protein resides in the sarcomere. The protein localises to the m line. Its subcellular location is the cytoskeleton. In terms of biological role, mediates nucleation of actin filaments and thereby promotes actin polymerization. Plays a role in the regulation of actin filament length. Required for normal sarcomere organization in the heart, and for normal heart function. This chain is Leiomodin-2 (LMOD2), found in Gallus gallus (Chicken).